Reading from the N-terminus, the 360-residue chain is Lactosylceramide 4-alpha-galactosyltransferase (360 aa).

The Cytoplasmic segment spans residues 1-30; sequence MGISRSDLEETMSKPPDCLPRMLRGTPRQR. The chain crosses the membrane as a helical; Signal-anchor for type II membrane protein span at residues 31–51; that stretch reads VFTLFIISFKFTFLVSILIYW. At 52–360 the chain is on the lumenal side; it reads HTVGAPKDQR…TTHRAMTMYL (309 aa). Residues 199–201 carry the DXD motif motif; it reads DTD. 2 N-linked (GlcNAc...) asparagine glycosylation sites follow: Asn210 and Asn316.

It belongs to the glycosyltransferase 32 family. As to expression, ubiquitous. Highly expressed in kidney, mesenteric lymph node, spleen and brain.

Its subcellular location is the golgi apparatus membrane. It catalyses the reaction a beta-D-Gal-(1-&gt;4)-beta-D-Glc-(1&lt;-&gt;1)-Cer(d18:1(4E)) + UDP-alpha-D-galactose = a globoside Gb3Cer (d18:1(4E)) + UDP + H(+). The catalysed reaction is a beta-D-Gal-(1&lt;-&gt;1')-ceramide + UDP-alpha-D-galactose = alpha-D-Gal-(1-&gt;4)-beta-D-Gal-(1&lt;-&gt;1')-Cer + UDP + H(+). It participates in glycolipid biosynthesis. In terms of biological role, catalyzes the transfer of galactose from UDP-alpha-D-galactose to lactosylceramide/beta-D-galactosyl-(1-&gt;4)-beta-D-glucosyl-(1&lt;-&gt;1)-ceramide(d18:1(4E)) to produce globotriaosylceramide/globoside Gb3Cer (d18:1(4E)). Also able to transfer galactose to galactosylceramide/beta-D-Gal-(1&lt;-&gt;1')-Cer. Globoside Gb3Cer is a glycosphingolipid of the globo serie, one of the major types of neutral root structures of glycosphingolipids, that constitute a significant portion of mammalian cell membranes. The sequence is that of Lactosylceramide 4-alpha-galactosyltransferase from Rattus norvegicus (Rat).